The following is a 912-amino-acid chain: Protein translocase subunit SecA (912 aa).

ATP is bound by residues glutamine 87, 105-109 (GEGKT), and aspartate 508. A disordered region spans residues 855–912 (QHQDAGGYGADEEVEQMQGGNAPVPVSQVTRDEPKVGRNDPCPCGSGKKYKHCHGQLS). Residues cysteine 896, cysteine 898, cysteine 907, and histidine 908 each contribute to the Zn(2+) site. The span at 902-912 (KKYKHCHGQLS) shows a compositional bias: basic residues.

The protein belongs to the SecA family. As to quaternary structure, monomer and homodimer. Part of the essential Sec protein translocation apparatus which comprises SecA, SecYEG and auxiliary proteins SecDF-YajC and YidC. Requires Zn(2+) as cofactor.

It localises to the cell inner membrane. It is found in the cytoplasm. It carries out the reaction ATP + H2O + cellular proteinSide 1 = ADP + phosphate + cellular proteinSide 2.. Its function is as follows. Part of the Sec protein translocase complex. Interacts with the SecYEG preprotein conducting channel. Has a central role in coupling the hydrolysis of ATP to the transfer of proteins into and across the cell membrane, serving both as a receptor for the preprotein-SecB complex and as an ATP-driven molecular motor driving the stepwise translocation of polypeptide chains across the membrane. The chain is Protein translocase subunit SecA from Xanthomonas campestris pv. campestris (strain B100).